The sequence spans 334 residues: Formamidase (334 aa).

The CN hydrolase domain occupies 14 to 260; that stretch reads FLVAAIQFPV…WEIVTGEIYP (247 aa). Catalysis depends on glutamate 60, which acts as the Proton acceptor. Lysine 133 serves as the catalytic Proton donor. The Nucleophile role is filled by cysteine 166.

It belongs to the carbon-nitrogen hydrolase superfamily. Aliphatic amidase family.

The enzyme catalyses formamide + H2O = formate + NH4(+). Its function is as follows. Is an aliphatic amidase with a restricted substrate specificity, as it only hydrolyzes formamide. The protein is Formamidase of Helicobacter acinonychis (strain Sheeba).